A 185-amino-acid polypeptide reads, in one-letter code: MTLAKNQKSSLSRLYKKVSSKRSESSRNLEDESRTSSNSSGSSSLNVNELRTVFDYMDANSDGKISGEELQSCVSLLGGALSSREVEEVVKTSDVDGDGFIDFEEFLKLMEGEDGSDEERRKELKEAFGMYVMEGEEFITAASLRRTLSRLGESCTVDACKVMIRGFDQNDDGVLSFDEFVLMMR.

A compositionally biased stretch (polar residues) spans 1–12 (MTLAKNQKSSLS). The tract at residues 1 to 45 (MTLAKNQKSSLSRLYKKVSSKRSESSRNLEDESRTSSNSSGSSSL) is disordered. The segment covering 21 to 34 (KRSESSRNLEDESR) has biased composition (basic and acidic residues). Over residues 35 to 44 (TSSNSSGSSS) the composition is skewed to low complexity. 4 EF-hand domains span residues 45–80 (LNVN…LGGA), 81–116 (LSSR…EDGS), 119–154 (ERRK…LGES), and 155–185 (CTVD…LMMR). Residues Asp58, Asn60, Asp62, Lys64, Glu69, Asp94, Asp96, Asp98, and Glu105 each contribute to the Ca(2+) site. Ca(2+)-binding residues include Asp168, Asn170, Asp172, and Glu179.

Binds to ABCG36. In terms of tissue distribution, expressed in cotyledons, stipule, young leaves and at the hypocotyl-root junction. In mature root, expressed in the stele, cortex, emerging lateral root, root tip and root cap. In mature plant, expressed at the base of cauline and floral branches, and in rosette and cauline leaves. Expressed from stage 9 to 14 of flower development in anthers. At stage 15, expressed in carpel, sepals, petals and pollen until dehiscence. Expressed in developing seeds and young siliques.

Functionally, potential calcium sensor that binds calcium in vitro. This Arabidopsis thaliana (Mouse-ear cress) protein is Calcium-binding protein CML37.